The primary structure comprises 354 residues: Photosystem II protein D1 (354 aa).

Position 2 is an N-acetylthreonine (T2). Phosphothreonine is present on T2. Transmembrane regions (helical) follow at residues 29–46, 118–133, and 142–156; these read YIGW…TATS, HFLL…EWEL, and WIAV…AATA. Position 118 (H118) interacts with chlorophyll a. Position 126 (Y126) interacts with pheophytin a. Positions 170 and 189 each coordinate [CaMn4O5] cluster. Residues 197 to 218 traverse the membrane as a helical segment; it reads FHMLGVAGVFGGSLFSAMHGSL. Chlorophyll a is bound at residue H198. Residues H215 and 264–265 contribute to the a quinone site; that span reads SF. H215 contributes to the Fe cation binding site. H272 contacts Fe cation. The chain crosses the membrane as a helical span at residues 274 to 288; the sequence is FLAAWPVVGIWFTAL. Residues H332, E333, D342, and A344 each coordinate [CaMn4O5] cluster. The propeptide occupies 345-354; it reads ASIEAPSLNG.

The protein belongs to the reaction center PufL/M/PsbA/D family. In terms of assembly, PSII is composed of 1 copy each of membrane proteins PsbA, PsbB, PsbC, PsbD, PsbE, PsbF, PsbH, PsbI, PsbJ, PsbK, PsbL, PsbM, PsbT, PsbX, PsbY, PsbZ, Psb30/Ycf12, at least 3 peripheral proteins of the oxygen-evolving complex and a large number of cofactors. It forms dimeric complexes. The D1/D2 heterodimer binds P680, chlorophylls that are the primary electron donor of PSII, and subsequent electron acceptors. It shares a non-heme iron and each subunit binds pheophytin, quinone, additional chlorophylls, carotenoids and lipids. D1 provides most of the ligands for the Mn4-Ca-O5 cluster of the oxygen-evolving complex (OEC). There is also a Cl(-1) ion associated with D1 and D2, which is required for oxygen evolution. The PSII complex binds additional chlorophylls, carotenoids and specific lipids. is required as a cofactor. Tyr-161 forms a radical intermediate that is referred to as redox-active TyrZ, YZ or Y-Z. Post-translationally, C-terminally processed by CTPA; processing is essential to allow assembly of the oxygen-evolving complex and thus photosynthetic growth.

Its subcellular location is the plastid. The protein localises to the chloroplast thylakoid membrane. It catalyses the reaction 2 a plastoquinone + 4 hnu + 2 H2O = 2 a plastoquinol + O2. Photosystem II (PSII) is a light-driven water:plastoquinone oxidoreductase that uses light energy to abstract electrons from H(2)O, generating O(2) and a proton gradient subsequently used for ATP formation. It consists of a core antenna complex that captures photons, and an electron transfer chain that converts photonic excitation into a charge separation. The D1/D2 (PsbA/PsbD) reaction center heterodimer binds P680, the primary electron donor of PSII as well as several subsequent electron acceptors. The polypeptide is Photosystem II protein D1 (Selaginella uncinata (Blue spike-moss)).